A 319-amino-acid chain; its full sequence is G-protein coupled receptor 55 (319 aa).

Topologically, residues 1–21 are extracellular; that stretch reads MSQQNTSGDCLFDGVNELMKT. N-linked (GlcNAc...) asparagine glycosylation occurs at Asn5. Residues 22 to 42 traverse the membrane as a helical segment; that stretch reads LQFAVHIPTFVLGLLLNLLAI. Residues 43 to 58 are Cytoplasmic-facing; sequence HGFSTFLKNRWPDYAA. A helical membrane pass occupies residues 59-79; sequence TSIYMINLAVFDLLLVLSLPF. Residues 80 to 94 lie on the Extracellular side of the membrane; sequence KMVLSQVQSPFPSLC. Residues 95–115 form a helical membrane-spanning segment; the sequence is TLVECLYFVSMYGSVFTICFI. The Cytoplasmic segment spans residues 116–137; it reads SMDRFLAIRYPLLVSHLRSPRK. The helical transmembrane segment at 138-158 threads the bilayer; that stretch reads IFGICCTIWVLVWTGSIPIYS. Residues 159-180 lie on the Extracellular side of the membrane; the sequence is FHGKVEKYMCFHNMSDDTWSAK. Asn171 is a glycosylation site (N-linked (GlcNAc...) asparagine). The chain crosses the membrane as a helical span at residues 181–201; that stretch reads VFFPLEVFGFLLPMGIMGFCC. Topologically, residues 202-231 are cytoplasmic; sequence SRSIHILLGRRDHTQDWVQQKACIYSIAAS. Residues 232–252 form a helical membrane-spanning segment; sequence LAVFVVSFLPVHLGFFLQFLV. Residues 253–271 lie on the Extracellular side of the membrane; sequence RNSFIVECRAKQSISFFLQ. Residues 272–292 traverse the membrane as a helical segment; that stretch reads LSMCFSNVNCCLDVFCYYFVI. Topologically, residues 293-319 are cytoplasmic; the sequence is KEFRMNIRAHRPSRVQLVLQDTTISRG.

The protein belongs to the G-protein coupled receptor 1 family. As to expression, expressed in the caudate nucleus and putamen, but not detected in the hippocampus, thalamus, pons cerebellum, frontal cortex of the brain or in the liver. Expressed in osteoclasts and osteoblasts. Higly expressed in macrophages and B-cells.

Its subcellular location is the cell membrane. Functionally, G-protein coupled receptor that binds to several ligands including 2-arachidonoyl lysophosphatidylinositol or lysophosphatidylglucoside with high affinity, leading to rapid and transient activation of numerous intracellular signaling pathways. Induces the Ca(2+) release from intracellular stores via ERK, the heterotrimeric G protein GNA13 and RHOA leading to morphological changes including cell rounding and stress fiber formation. In macrophages, acts downstream of lysophosphatidylglucoside to inhibit the translocation of the phospholipid-transporting ABCA1 to plasma membrane and subsequent cholesterol efflux leading to lipid accumulation and foam cell formation. This is G-protein coupled receptor 55 (GPR55) from Homo sapiens (Human).